The chain runs to 486 residues: D-mannonate oxidoreductase (486 aa).

25–36 contributes to the NAD(+) binding site; that stretch reads IVHLGCGAFHRA.

The protein belongs to the mannitol dehydrogenase family. UxuB subfamily.

The enzyme catalyses D-mannonate + NAD(+) = keto-D-fructuronate + NADH + H(+). It participates in carbohydrate metabolism; pentose and glucuronate interconversion. The sequence is that of D-mannonate oxidoreductase (uxuB) from Escherichia coli (strain K12).